A 212-amino-acid polypeptide reads, in one-letter code: MKAKREALQSLFTAMRDGKVDGDIIDLLLLINSIKGIYTTSSCSGRIGIIEEPALGAKPLSRWLIKVHRPIEFEEAKEALKNAKEGIIFLKSQPPIFHVVAEDLEKARKLHELGLASGFKYTTFKVISKRYLVEINATEYLTAPLGRDGRVLVDDGYLRFAVEIGNEMLRRSKGRLPRLEENFRRLREELGTDELFYELVEEYKIRENWELP.

This sequence belongs to the TYW3 family.

The catalysed reaction is 4-demethyl-7-[(3S)-3-amino-3-carboxypropyl]wyosine(37) in tRNA(Phe) + S-adenosyl-L-methionine = 7-[(3S)-3-amino-3-carboxypropyl]wyosine(37) in tRNA(Phe) + S-adenosyl-L-homocysteine + H(+). In terms of biological role, S-adenosyl-L-methionine-dependent methyltransferase that acts as a component of the wyosine derivatives biosynthesis pathway. Probably methylates N-4 position of wybutosine-86 to produce wybutosine-72. This is tRNA(Phe) 7-((3-amino-3-carboxypropyl)-4-demethylwyosine(37)-N(4))-methyltransferase 2 from Thermococcus kodakarensis (strain ATCC BAA-918 / JCM 12380 / KOD1) (Pyrococcus kodakaraensis (strain KOD1)).